The primary structure comprises 270 residues: Tryptophan synthase alpha chain (270 aa).

Active-site proton acceptor residues include E49 and D60.

Belongs to the TrpA family. As to quaternary structure, tetramer of two alpha and two beta chains.

It carries out the reaction (1S,2R)-1-C-(indol-3-yl)glycerol 3-phosphate + L-serine = D-glyceraldehyde 3-phosphate + L-tryptophan + H2O. Its pathway is amino-acid biosynthesis; L-tryptophan biosynthesis; L-tryptophan from chorismate: step 5/5. In terms of biological role, the alpha subunit is responsible for the aldol cleavage of indoleglycerol phosphate to indole and glyceraldehyde 3-phosphate. The sequence is that of Tryptophan synthase alpha chain from Pseudomonas syringae pv. tomato (strain ATCC BAA-871 / DC3000).